A 176-amino-acid polypeptide reads, in one-letter code: Shikimate kinase (176 aa).

14–19 (GAGKST) serves as a coordination point for ATP. S18 lines the Mg(2+) pocket. The substrate site is built by D36, R60, and G83. R121 contacts ATP. Substrate is bound at residue R140.

Belongs to the shikimate kinase family. In terms of assembly, monomer. The cofactor is Mg(2+).

The protein localises to the cytoplasm. The enzyme catalyses shikimate + ATP = 3-phosphoshikimate + ADP + H(+). Its pathway is metabolic intermediate biosynthesis; chorismate biosynthesis; chorismate from D-erythrose 4-phosphate and phosphoenolpyruvate: step 5/7. In terms of biological role, catalyzes the specific phosphorylation of the 3-hydroxyl group of shikimic acid using ATP as a cosubstrate. In Francisella tularensis subsp. tularensis (strain FSC 198), this protein is Shikimate kinase.